The sequence spans 352 residues: Strictosidine synthase (352 aa).

An N-terminal signal peptide occupies residues 1 to 31 (MANFSESKSMMAVFFMFFLLLLSSSSSSSSS). N-linked (GlcNAc...) asparagine glycans are attached at residues N95 and N187.

Belongs to the strictosidine synthase family. Monomer.

Its subcellular location is the vacuole. The catalysed reaction is 3alpha(S)-strictosidine + H2O = secologanin + tryptamine. It functions in the pathway alkaloid biosynthesis; 3alpha(S)-strictosidine biosynthesis; 3alpha(S)-strictosidine from secologanin and tryptamine: step 1/1. Functionally, catalyzes the stereospecific condensation of tryptamine with secologanin to form strictosidine, the key intermediate of indole alkaloid biosynthesis. The sequence is that of Strictosidine synthase (STR1) from Catharanthus roseus (Madagascar periwinkle).